The following is a 379-amino-acid chain: Cytochrome b (379 aa).

Helical transmembrane passes span 33–53 (FGSLLGMCLVIQILTGLFLAM), 77–98 (WLIRYLHANGASMFFICLFIHV), 113–133 (WNIGIILLLTTMATAFVGYVL), and 178–198 (FFAFHFILPFIIAAFALVHLL). Residues H83 and H97 each coordinate heme b. 2 residues coordinate heme b: H182 and H196. A ubiquinone is bound at residue H201. A run of 4 helical transmembrane segments spans residues 226 to 246 (IKDLLGIFLLLLILMALALFF), 288 to 308 (LGGVLALILSILILAAFPLLN), 320 to 340 (VTQTIYWIFIANLLVLTWIGG), and 347 to 367 (FTMIGQIASVTYFTIITILIP).

Belongs to the cytochrome b family. The cytochrome bc1 complex contains 11 subunits: 3 respiratory subunits (MT-CYB, CYC1 and UQCRFS1), 2 core proteins (UQCRC1 and UQCRC2) and 6 low-molecular weight proteins (UQCRH/QCR6, UQCRB/QCR7, UQCRQ/QCR8, UQCR10/QCR9, UQCR11/QCR10 and a cleavage product of UQCRFS1). This cytochrome bc1 complex then forms a dimer. Heme b is required as a cofactor.

It localises to the mitochondrion inner membrane. Its function is as follows. Component of the ubiquinol-cytochrome c reductase complex (complex III or cytochrome b-c1 complex) that is part of the mitochondrial respiratory chain. The b-c1 complex mediates electron transfer from ubiquinol to cytochrome c. Contributes to the generation of a proton gradient across the mitochondrial membrane that is then used for ATP synthesis. The protein is Cytochrome b (MT-CYB) of Akodon philipmyersi (Myers' grass mouse).